Reading from the N-terminus, the 201-residue chain is NADH-quinone oxidoreductase subunit C (201 aa).

Belongs to the complex I 30 kDa subunit family. As to quaternary structure, NDH-1 is composed of 14 different subunits. Subunits NuoB, C, D, E, F, and G constitute the peripheral sector of the complex.

The protein localises to the cell inner membrane. It carries out the reaction a quinone + NADH + 5 H(+)(in) = a quinol + NAD(+) + 4 H(+)(out). Functionally, NDH-1 shuttles electrons from NADH, via FMN and iron-sulfur (Fe-S) centers, to quinones in the respiratory chain. The immediate electron acceptor for the enzyme in this species is believed to be ubiquinone. Couples the redox reaction to proton translocation (for every two electrons transferred, four hydrogen ions are translocated across the cytoplasmic membrane), and thus conserves the redox energy in a proton gradient. This Mesorhizobium japonicum (strain LMG 29417 / CECT 9101 / MAFF 303099) (Mesorhizobium loti (strain MAFF 303099)) protein is NADH-quinone oxidoreductase subunit C.